Here is a 1661-residue protein sequence, read N- to C-terminus: Mediator of RNA polymerase II transcription subunit 12 (1661 aa).

Disordered stretches follow at residues 1–22 (MSKT…VSNS), 524–550 (KDRR…ITGK), and 1501–1527 (DDMT…PDGT). 3 stretches are compositionally biased toward polar residues: residues 7 to 22 (RNSL…VSNS), 539 to 548 (DTKNNYNSIT), and 1505 to 1527 (TDTS…PDGT).

The protein belongs to the Mediator complex subunit 12 family. In terms of assembly, component of the SRB8-11 complex, which itself associates with the Mediator complex.

It is found in the nucleus. In terms of biological role, component of the SRB8-11 complex. The SRB8-11 complex is a regulatory module of the Mediator complex which is itself involved in regulation of basal and activated RNA polymerase II-dependent transcription. The SRB8-11 complex may be involved in the transcriptional repression of a subset of genes regulated by Mediator. It may inhibit the association of the Mediator complex with RNA polymerase II to form the holoenzyme complex. The chain is Mediator of RNA polymerase II transcription subunit 12 (SRB8) from Debaryomyces hansenii (strain ATCC 36239 / CBS 767 / BCRC 21394 / JCM 1990 / NBRC 0083 / IGC 2968) (Yeast).